A 179-amino-acid chain; its full sequence is GTP-dependent dephospho-CoA kinase (179 aa).

Residues D50, V51, V52, D69, K71, and E126 each coordinate GTP.

It belongs to the GTP-dependent DPCK family.

It carries out the reaction 3'-dephospho-CoA + GTP = GDP + CoA + H(+). It participates in cofactor biosynthesis; coenzyme A biosynthesis. Catalyzes the GTP-dependent phosphorylation of the 3'-hydroxyl group of dephosphocoenzyme A to form coenzyme A (CoA). This chain is GTP-dependent dephospho-CoA kinase, found in Pyrococcus horikoshii (strain ATCC 700860 / DSM 12428 / JCM 9974 / NBRC 100139 / OT-3).